Consider the following 326-residue polypeptide: Ficolin-1 (326 aa).

A signal peptide spans M1–A29. Residues G55 to R93 form the Collagen-like domain. Low complexity-rich tracts occupy residues G61–P71 and P78–P89. A disordered region spans residues G61–S110. Residues K90–E104 show a composition bias toward basic and acidic residues. Positions Q109–T326 constitute a Fibrinogen C-terminal domain. 2 disulfide bridges follow: C111-C139 and C118-C146. The segment at P115–G154 is a domain; contributes to trimerization. Residues W155–N243 are b domain; contributes to trimerization. Positions 262 and 264 each coordinate Ca(2+). An N-linked (GlcNAc...) asparagine glycan is attached at N265. C270 and C283 form a disulfide bridge. Residue A282–H284 coordinates a carbohydrate. An N-linked (GlcNAc...) asparagine glycan is attached at N313. The segment at Q317 to T326 is p domain.

It belongs to the ficolin lectin family. Homotrimer. Interacts with elastin/ELN. Interacts (via Fibrinogen C-terminal domain) with FFAR2. Interacts with CRP; may regulate monocyte activation by FCN1. As to expression, most abundantly expressed in placenta and lung.

Its subcellular location is the secreted. The protein resides in the cell membrane. Extracellular lectin functioning as a pattern-recognition receptor in innate immunity. Binds the sugar moieties of pathogen-associated molecular patterns (PAMPs) displayed on microbes and activates the lectin pathway of the complement system. May also activate monocytes through a G protein-coupled receptor, FFAR2, inducing the secretion of interleukin-8/IL-8. Binds preferentially to 9-O-acetylated 2-6-linked sialic acid derivatives and to various glycans containing sialic acid engaged in a 2-3 linkage. The chain is Ficolin-1 (FCN1) from Sus scrofa (Pig).